Here is a 308-residue protein sequence, read N- to C-terminus: MNLIICCTPLQVLIAEKIIAKFPHMPFYGVMLSTVSNKKFDFYAKRLAQQCQGFFSMVQHKDRFNLLKEILYLKRTFSGKHFDQVFVANINDLQIQFLLSAIDFNLLNTFDDGTINIVPNSLFYQDDPATLQRKLINVLLGNKYSIQSLRALSHTHYTIYKGFKNIIERVEPIELVAADNSEKVTSAVINVLLGQPVFAEDERNIALAERVIKQFNIHYYLPHPREKYRLAQVNYIDTELIFEDYILQQCQTHKYCVYTYFSSAIINIMNKSDNIEVVALKIDTENPAYDACYDLFDELGVNVIDIRE.

D201 (proton acceptor) is an active-site residue. CMP-N-acetyl-beta-neuraminate is bound by residues 221–225, 242–243, and 262–263; these read LPHPR, FE, and SS. H223 functions as the Proton donor in the catalytic mechanism.

Belongs to the glycosyltransferase 52 family. Divalent metal cations are not required for the alpha-2,3-sialyltransferase activity. serves as cofactor.

Functionally, catalyzes the transfer of sialic acid from the substrate CMP-N-acetylneuraminate to lactosyl lipids as preferred acceptor substrates in vitro, forming alpha-2,3-linked sialosides. Beta-1,4-linked galactosyl lipids are better substrates than beta-1,3-linked galactosyl lipids. The natural acceptor substrate may be cell surface oligosaccharides in lipooligosaccharide (LOS), whose sialylation has been demonstrated vital for the virulence of P.multocida. This Pasteurella multocida (strain Pm70) protein is CMP-N-acetylneuraminate:beta-galactoside alpha-2,3-sialyltransferase (lst).